The sequence spans 132 residues: Ribonuclease P protein component (132 aa).

The protein belongs to the RnpA family. Consists of a catalytic RNA component (M1 or rnpB) and a protein subunit.

It catalyses the reaction Endonucleolytic cleavage of RNA, removing 5'-extranucleotides from tRNA precursor.. In terms of biological role, RNaseP catalyzes the removal of the 5'-leader sequence from pre-tRNA to produce the mature 5'-terminus. It can also cleave other RNA substrates such as 4.5S RNA. The protein component plays an auxiliary but essential role in vivo by binding to the 5'-leader sequence and broadening the substrate specificity of the ribozyme. This Marinobacter nauticus (strain ATCC 700491 / DSM 11845 / VT8) (Marinobacter aquaeolei) protein is Ribonuclease P protein component.